Consider the following 406-residue polypeptide: Tryptophan synthase beta chain (406 aa).

Residue lysine 99 is modified to N6-(pyridoxal phosphate)lysine.

This sequence belongs to the TrpB family. In terms of assembly, tetramer of two alpha and two beta chains. Requires pyridoxal 5'-phosphate as cofactor.

It catalyses the reaction (1S,2R)-1-C-(indol-3-yl)glycerol 3-phosphate + L-serine = D-glyceraldehyde 3-phosphate + L-tryptophan + H2O. Its pathway is amino-acid biosynthesis; L-tryptophan biosynthesis; L-tryptophan from chorismate: step 5/5. In terms of biological role, the beta subunit is responsible for the synthesis of L-tryptophan from indole and L-serine. This chain is Tryptophan synthase beta chain (trpB), found in Agrobacterium fabrum (strain C58 / ATCC 33970) (Agrobacterium tumefaciens (strain C58)).